Consider the following 25-residue polypeptide: Ocellatin-P1 (25 aa).

A Leucine amide modification is found at L25.

As to expression, expressed by the skin glands.

It localises to the secreted. Antibacterial peptide that inhibits reference strains of both Gram-negative bacteria (E.coli, E.cloacae, K.pneumoniae, P.aeruginosa) and Gram-positive bacteria (S.aureus, S.epidermidis, E.faecalis, Streptococcus group B) with relatively low potencies (MIC=25-200 uM). The peptide shows very low hemolytic activity against human erythrocytes. Wheel projection demonstrates the amphipathicity of the alpha-helices is low which may explain the low antibacterial potency. In Leptodactylus pentadactylus (Smokey jungle frog), this protein is Ocellatin-P1.